Consider the following 426-residue polypeptide: 3-phosphoshikimate 1-carboxyvinyltransferase (426 aa).

The 3-phosphoshikimate site is built by lysine 20, serine 21, and arginine 25. Lysine 20 is a binding site for phosphoenolpyruvate. The phosphoenolpyruvate site is built by glycine 92 and arginine 120. The 3-phosphoshikimate site is built by serine 165, glutamine 167, aspartate 313, and lysine 340. Glutamine 167 lines the phosphoenolpyruvate pocket. Aspartate 313 (proton acceptor) is an active-site residue. Phosphoenolpyruvate is bound by residues arginine 344 and arginine 386.

It belongs to the EPSP synthase family. In terms of assembly, monomer.

It localises to the cytoplasm. It catalyses the reaction 3-phosphoshikimate + phosphoenolpyruvate = 5-O-(1-carboxyvinyl)-3-phosphoshikimate + phosphate. The protein operates within metabolic intermediate biosynthesis; chorismate biosynthesis; chorismate from D-erythrose 4-phosphate and phosphoenolpyruvate: step 6/7. Catalyzes the transfer of the enolpyruvyl moiety of phosphoenolpyruvate (PEP) to the 5-hydroxyl of shikimate-3-phosphate (S3P) to produce enolpyruvyl shikimate-3-phosphate and inorganic phosphate. This chain is 3-phosphoshikimate 1-carboxyvinyltransferase, found in Brevibacillus brevis (strain 47 / JCM 6285 / NBRC 100599).